Consider the following 257-residue polypeptide: Major prion protein (257 aa).

The N-terminal stretch at 1–24 (MVKSHIGSWLLVLFVATWSDIGFC) is a signal peptide. An interaction with GRB2, ERI3 and SYN1 region spans residues 25–234 (KKRPKPGGGW…ESEAYYQRGA (210 aa)). The segment at 27 to 114 (RPKPGGGWNT…KPSKPKTNMK (88 aa)) is disordered. A run of 5 repeats spans residues 54–62 (PQGGGGWGQ), 63–70 (PHGGGWGQ), 71–78 (PHGGGWGQ), 79–86 (PHGGGWGQ), and 87–95 (PHGGGGWGQ). Residues 54–95 (PQGGGGWGQPHGGGWGQPHGGGWGQPHGGGWGQPHGGGGWGQ) are 5 X 8 AA tandem repeats of P-H-G-G-G-W-G-Q. A compositionally biased stretch (gly residues) spans 55–101 (QGGGGWGQPHGGGWGQPHGGGWGQPHGGGWGQPHGGGGWGQGGGSHG). Residues histidine 64, glycine 65, glycine 66, histidine 72, glycine 73, glycine 74, histidine 80, glycine 81, glycine 82, histidine 88, glycine 90, and glycine 91 each coordinate Cu(2+). Cysteine 183 and cysteine 218 are disulfide-bonded. 2 N-linked (GlcNAc...) asparagine glycosylation sites follow: asparagine 185 and asparagine 201. Alanine 234 is lipidated: GPI-anchor amidated alanine. Positions 235 to 257 (SAILFSPPPVILLISLLILLIVG) are cleaved as a propeptide — removed in mature form.

The protein belongs to the prion family. Monomer and homodimer. Has a tendency to aggregate into amyloid fibrils containing a cross-beta spine, formed by a steric zipper of superposed beta-strands. Soluble oligomers may represent an intermediate stage on the path to fibril formation. Copper binding may promote oligomerization. Interacts with GRB2, APP, ERI3/PRNPIP and SYN1. Mislocalized cytosolically exposed PrP interacts with MGRN1; this interaction alters MGRN1 subcellular location and causes lysosomal enlargement. Interacts with KIAA1191.

The protein resides in the cell membrane. The protein localises to the golgi apparatus. Functionally, its primary physiological function is unclear. Has cytoprotective activity against internal or environmental stresses. May play a role in neuronal development and synaptic plasticity. May be required for neuronal myelin sheath maintenance. May play a role in iron uptake and iron homeostasis. Soluble oligomers are toxic to cultured neuroblastoma cells and induce apoptosis (in vitro). Association with GPC1 (via its heparan sulfate chains) targets PRNP to lipid rafts. Also provides Cu(2+) or Zn(2+) for the ascorbate-mediated GPC1 deaminase degradation of its heparan sulfate side chains. This chain is Major prion protein (PRNP), found in Mustela putorius furo (European domestic ferret).